The following is a 261-amino-acid chain: Small ribosomal subunit protein uS3 (261 aa).

The KH type-2 domain maps to 39-107 (VREYLKRKLA…PVHVSIEEIR (69 aa)). The interval 213-261 (QPVAEEPAADDRRPRRTPGRPDGDKPRTRTVKKVDGAADPAKRVRKAGA) is disordered. Residues 221–254 (ADDRRPRRTPGRPDGDKPRTRTVKKVDGAADPAK) are compositionally biased toward basic and acidic residues.

This sequence belongs to the universal ribosomal protein uS3 family. As to quaternary structure, part of the 30S ribosomal subunit. Forms a tight complex with proteins S10 and S14.

In terms of biological role, binds the lower part of the 30S subunit head. Binds mRNA in the 70S ribosome, positioning it for translation. In Dechloromonas aromatica (strain RCB), this protein is Small ribosomal subunit protein uS3.